We begin with the raw amino-acid sequence, 226 residues long: Probable transcriptional regulator RABBIT EARS (226 aa).

The C2H2-type zinc-finger motif lies at 55–77; sequence YSCSFCGREFKSAQALGGHMNVH. Positions 80 to 102 are disordered; that stretch reads DRARLKQQSLSPSSTDQATPPEC. Positions 85 to 97 are enriched in polar residues; the sequence is KQQSLSPSSTDQA. Positions 212–216 match the EAR-like (transcriptional repression) motif; sequence LDLEL.

As to expression, strongly expressed in inflorescences and flowers, and weakly in siliques, seedlings and roots. In flowers, it is expressed in petal primordia and their precursor cells. Also expressed in the lateral root caps and the basal cells of lateral roots.

It is found in the nucleus. Functionally, probable transcriptional regulator essential for petal development. Required for the early development of the organ primordia of the second whorl. Acts downstream of AP1 and PTL. The polypeptide is Probable transcriptional regulator RABBIT EARS (RBE) (Arabidopsis thaliana (Mouse-ear cress)).